The primary structure comprises 833 residues: MKYPFMATRGVITFIGNSSTIEVGRPLSLAAIDLAKSDFENKLVLIPQKNIKQNEIEFEKDLENVGILTKIKSIKILSNGNRKIIVEGVERIKLDSIEKDKNNNDIIANLSLYPVLKNENGSSETIIEKMQTSLNNIIESNLPLVANQELSKHESSERYTYILAHYLTMPFEKKFEIFAKKSLTEMLELIFSFLVELKNIQKLDVDLDKDIKKNLDSQQREYLLRERLKVIQKKLGDDENDEEEIEEKLNSKYGKEQYPEEVIKTIKNEKRRLKNMMSSSPEANTSRTYIEWLTNLPWRKVSVDKTNLVKSKEILDSYHYGLKEVKERIIEFLAVMINNNKKHPEDEKTKIQIPNSDYEINKNLFTKKNASDDTYSYKSSNNVPILALVGPPGTGKTSLAKAIAETLDRKFIKISLGGVKDEAEIRGHRRTYVGALPGKIIQAIKKAGVSNPVILLDEIDKMSSDYKGDPTSAMLEVLDPEQNVNFQDHYIELEYDLSKVLFIATANYYQNISAPLLDRVEIIELSSYTSLEKIRIARDYLIKKVLEQNSLEESQFKISDESLDFLIKHYTLEAGVRNLQRALDKLARKIVVKSLENKLEKDFVITSEEIVNLLGVIKYTDDFKENYERIGAVNGLAYTQYGGSTLSIEVTTFPNSKGGIKLTGQLKEVMQESAQIALAFVRSNAKKYEIDFNFEANQIHIHVPEGAVPKDGPSAGVTFTTAIISALKQIPVSHKVGMTGEITLRGKVLPIGGLKEKSLAAHKLGIKTVFIPNENNRNLVEVADEVKESIEFISVSDYDEIFENLFGKLSDNKKITSNSKIPKKDISKANPTH.

A Lon N-terminal domain is found at 3-198; that stretch reads YPFMATRGVI…LIFSFLVELK (196 aa). Position 390 to 397 (390 to 397) interacts with ATP; that stretch reads GPPGTGKT. One can recognise a Lon proteolytic domain in the interval 627–808; that stretch reads YERIGAVNGL…DEIFENLFGK (182 aa). Catalysis depends on residues serine 714 and lysine 757.

Belongs to the peptidase S16 family. Homohexamer. Organized in a ring with a central cavity.

Its subcellular location is the cytoplasm. It carries out the reaction Hydrolysis of proteins in presence of ATP.. Its function is as follows. ATP-dependent serine protease that mediates the selective degradation of mutant and abnormal proteins as well as certain short-lived regulatory proteins. Required for cellular homeostasis and for survival from DNA damage and developmental changes induced by stress. Degrades polypeptides processively to yield small peptide fragments that are 5 to 10 amino acids long. Binds to DNA in a double-stranded, site-specific manner. This is Lon protease from Mycoplasma mobile (strain ATCC 43663 / 163K / NCTC 11711) (Mesomycoplasma mobile).